A 65-amino-acid chain; its full sequence is Alpha-insect toxin BotIT1 (65 aa).

Residues arginine 2–histidine 64 form the LCN-type CS-alpha/beta domain. Disulfide bonds link cysteine 12–cysteine 63, cysteine 16–cysteine 36, cysteine 22–cysteine 46, and cysteine 26–cysteine 48.

The protein belongs to the long (4 C-C) scorpion toxin superfamily. Sodium channel inhibitor family. Alpha subfamily. As to expression, expressed by the venom gland.

It is found in the secreted. In terms of biological role, alpha toxins bind voltage-independently at site-3 of sodium channels (Nav) and inhibit the inactivation of the activated channels, thereby blocking neuronal transmission. This contractive toxin is highly toxic to insects and barely toxic to mammals. This chain is Alpha-insect toxin BotIT1, found in Buthus occitanus tunetanus (Common European scorpion).